A 173-amino-acid chain; its full sequence is Crossover junction endodeoxyribonuclease RuvC (173 aa).

Residues Asp8, Glu67, and Asp139 contribute to the active site. Asp8, Glu67, and Asp139 together coordinate Mg(2+).

This sequence belongs to the RuvC family. As to quaternary structure, homodimer which binds Holliday junction (HJ) DNA. The HJ becomes 2-fold symmetrical on binding to RuvC with unstacked arms; it has a different conformation from HJ DNA in complex with RuvA. In the full resolvosome a probable DNA-RuvA(4)-RuvB(12)-RuvC(2) complex forms which resolves the HJ. Requires Mg(2+) as cofactor.

Its subcellular location is the cytoplasm. It catalyses the reaction Endonucleolytic cleavage at a junction such as a reciprocal single-stranded crossover between two homologous DNA duplexes (Holliday junction).. Its function is as follows. The RuvA-RuvB-RuvC complex processes Holliday junction (HJ) DNA during genetic recombination and DNA repair. Endonuclease that resolves HJ intermediates. Cleaves cruciform DNA by making single-stranded nicks across the HJ at symmetrical positions within the homologous arms, yielding a 5'-phosphate and a 3'-hydroxyl group; requires a central core of homology in the junction. The consensus cleavage sequence is 5'-(A/T)TT(C/G)-3'. Cleavage occurs on the 3'-side of the TT dinucleotide at the point of strand exchange. HJ branch migration catalyzed by RuvA-RuvB allows RuvC to scan DNA until it finds its consensus sequence, where it cleaves and resolves the cruciform DNA. This is Crossover junction endodeoxyribonuclease RuvC from Vibrio vulnificus (strain CMCP6).